A 1167-amino-acid chain; its full sequence is Kinesin-like protein KIN-14M (1167 aa).

The interval 93 to 130 is disordered; that stretch reads PRKENDPGTQNSEGRRKIPKNPAMSEPSSPLSQTTLSS. Residues 117-130 show a composition bias toward low complexity; that stretch reads SEPSSPLSQTTLSS. 3 coiled-coil regions span residues 271–333, 366–398, and 432–489; these read VHQM…KEEM, AKYR…AMKS, and KQEL…ESRS. Residues 572-900 form the Kinesin motor domain; sequence NIRVHCRIRP…LKFADRVSGV (329 aa). 656–663 contacts ATP; sequence GQTGSGKT. The stretch at 907–944 forms a coiled coil; sequence ANKEGKDIKEFKEQLSLLKDKIAKKDEEISRLQLQSHN. Disordered regions lie at residues 955–974 and 1083–1167; these read SLLK…SKIQ and PDQD…KRWT. A compositionally biased stretch (low complexity) spans 958–972; that stretch reads KHSSSSPGISSLGSK. 2 stretches are compositionally biased toward polar residues: residues 1113-1124 and 1151-1167; these read ASRTTTPKTPQS and TQAT…KRWT.

Belongs to the TRAFAC class myosin-kinesin ATPase superfamily. Kinesin family. KIN-14 subfamily.

The protein is Kinesin-like protein KIN-14M of Oryza sativa subsp. japonica (Rice).